A 362-amino-acid polypeptide reads, in one-letter code: Carbamoyl phosphate synthase small chain (362 aa).

Positions 1 to 169 (MGKRLLILED…TKTAYPAPGV (169 aa)) are CPSase. Residues S46, G220, and G222 each contribute to the L-glutamine site. Positions 172–358 (NIVLVDFGLK…LELIDAFQLE (187 aa)) constitute a Glutamine amidotransferase type-1 domain. The Nucleophile role is filled by C247. L-glutamine contacts are provided by M248, Q251, N289, G291, and Y292. Residues H331 and D333 contribute to the active site.

This sequence belongs to the CarA family. In terms of assembly, composed of two chains; the small (or glutamine) chain promotes the hydrolysis of glutamine to ammonia, which is used by the large (or ammonia) chain to synthesize carbamoyl phosphate. Tetramer of heterodimers (alpha,beta)4.

It catalyses the reaction hydrogencarbonate + L-glutamine + 2 ATP + H2O = carbamoyl phosphate + L-glutamate + 2 ADP + phosphate + 2 H(+). The enzyme catalyses L-glutamine + H2O = L-glutamate + NH4(+). The protein operates within amino-acid biosynthesis; L-arginine biosynthesis; carbamoyl phosphate from bicarbonate: step 1/1. Its pathway is pyrimidine metabolism; UMP biosynthesis via de novo pathway; (S)-dihydroorotate from bicarbonate: step 1/3. Small subunit of the glutamine-dependent carbamoyl phosphate synthetase (CPSase). CPSase catalyzes the formation of carbamoyl phosphate from the ammonia moiety of glutamine, carbonate, and phosphate donated by ATP, constituting the first step of 2 biosynthetic pathways, one leading to arginine and/or urea and the other to pyrimidine nucleotides. The small subunit (glutamine amidotransferase) binds and cleaves glutamine to supply the large subunit with the substrate ammonia. In Streptococcus mutans serotype c (strain ATCC 700610 / UA159), this protein is Carbamoyl phosphate synthase small chain.